The primary structure comprises 280 residues: uncharacterized protein (280 aa).

2 disordered regions span residues 1–124 (MPRD…QREA) and 177–280 (LEEE…LSSK). 2 stretches are compositionally biased toward basic residues: residues 16–36 (SRRRKHSRSPVRQRHSRRSRR) and 48–83 (YSRRKSRSISPRRHRSRSVTPKRRSPTPKRYKRQKS). Composition is skewed to basic and acidic residues over residues 102–124 (AKNRNGEKLKREEEERKRRQREA) and 182–259 (EASL…ERLK).

This is an uncharacterized protein from Arabidopsis thaliana (Mouse-ear cress).